The sequence spans 55 residues: uncharacterized protein (55 aa).

Residues 27–44 (SFWFILISASSFLIYSLF) form a helical membrane-spanning segment.

The protein localises to the membrane. This is an uncharacterized protein from Dictyostelium discoideum (Social amoeba).